Here is an 89-residue protein sequence, read N- to C-terminus: UPF0297 protein SUB1776 (89 aa).

This sequence belongs to the UPF0297 family.

The sequence is that of UPF0297 protein SUB1776 from Streptococcus uberis (strain ATCC BAA-854 / 0140J).